A 652-amino-acid chain; its full sequence is Thioredoxin reductase 3 (652 aa).

The segment covering 1–12 (MEKPPSPPPPPR) has biased composition (pro residues). The segment at 1–62 (MEKPPSPPPP…TSRPSSEARE (62 aa)) is disordered. The residue at position 34 (arginine 34) is an Asymmetric dimethylarginine; alternate. At arginine 34 the chain carries Omega-N-methylarginine; alternate. Serine 50 carries the phosphoserine modification. A Glutaredoxin domain is found at 65 to 165 (RRRLRDLIEG…KLLQDDSAHD (101 aa)). Position 167–196 (167–196 (DLIIIGGGSGGLSCAKEAANLGKKVMVLDF)) interacts with FAD. Residues cysteine 212 and cysteine 217 are joined by a disulfide bond. Lysine 388 is subject to N6-succinyllysine. Histidine 625 serves as the catalytic Proton acceptor. The segment at residues 650–651 (CU) is a cross-link (cysteinyl-selenocysteine (Cys-Sec)). Position 651 (selenocysteine 651) is a non-standard amino acid, selenocysteine.

Belongs to the class-I pyridine nucleotide-disulfide oxidoreductase family. Homodimer. The cofactor is FAD. As to expression, expressed preferentially in testis where it is found in spermatids and spermatocytes but not in sperm. In elongating spermatids, expressed at the site of mitochondrial sheath formation. Low levels in other tissues including heart, lung, liver, kidney, brain, muscle and prostate.

It is found in the cytoplasm. The protein resides in the nucleus. The protein localises to the microsome. Its subcellular location is the endoplasmic reticulum. The catalysed reaction is [thioredoxin]-dithiol + NADP(+) = [thioredoxin]-disulfide + NADPH + H(+). Displays thioredoxin reductase, glutaredoxin and glutathione reductase activities. Catalyzes disulfide bond isomerization. Promotes disulfide bond formation between GPX4 and various sperm proteins and may play a role in sperm maturation by promoting formation of sperm structural components. In Mus musculus (Mouse), this protein is Thioredoxin reductase 3.